The chain runs to 334 residues: MKKNQFLKESDVTAESVFFMKRRQVLKALGISAAALSLPHAAHADLLSWFKGNDRPPAPAGKALEFSKPAAWQNNLPLTPADKVSGYNNFYEFGLDKADPAANAGSLKTDPWTLKISGEVAKPLTLDHDDLTRRFPLEERIYRMRCVEAWSMVVPWIGFPLHKLLALAEPTSNAKYVAFETIYAPEQMPGQQDRFIGGGLKYPYVEGLRLDEAMHPLTLMTVGVYGKALPPQNGAPVRLIVPWKYGFKGIKSIVSIKLTRERPPTTWNLAAPDEYGFYANVNPHVDHPRWSQATERFIGSGGILNVQRQPTLLFNGYAEQVASLYRGLDLRENF.

A signal peptide (tat-type signal) is located at residues 1–44 (MKKNQFLKESDVTAESVFFMKRRQVLKALGISAAALSLPHAAHA). Residues Asn88, 91-92 (YE), Cys146, Thr181, Asn233, Arg238, and 249-251 (GIK) contribute to the Mo-molybdopterin site.

The protein belongs to the MsrP family. Heterodimer of a catalytic subunit (MsrP) and a heme-binding subunit (MsrQ). Mo-molybdopterin is required as a cofactor. Post-translationally, predicted to be exported by the Tat system. The position of the signal peptide cleavage has not been experimentally proven.

Its subcellular location is the periplasm. The catalysed reaction is L-methionyl-[protein] + a quinone + H2O = L-methionyl-(S)-S-oxide-[protein] + a quinol. It carries out the reaction L-methionyl-[protein] + a quinone + H2O = L-methionyl-(R)-S-oxide-[protein] + a quinol. Part of the MsrPQ system that repairs oxidized periplasmic proteins containing methionine sulfoxide residues (Met-O), using respiratory chain electrons. Thus protects these proteins from oxidative-stress damage caused by reactive species of oxygen and chlorine generated by the host defense mechanisms. MsrPQ is essential for the maintenance of envelope integrity under bleach stress, rescuing a wide series of structurally unrelated periplasmic proteins from methionine oxidation, including the primary periplasmic chaperone SurA and the lipoprotein Pal. The catalytic subunit MsrP is non-stereospecific, being able to reduce both (R-) and (S-) diastereoisomers of methionine sulfoxide. This is Protein-methionine-sulfoxide reductase catalytic subunit MsrP from Escherichia coli (strain UTI89 / UPEC).